The primary structure comprises 593 residues: Elongation factor 4 (593 aa).

In terms of domain architecture, tr-type G spans 2 to 181; it reads KNIRNFCIIA…AVVERIPHPT (180 aa). GTP-binding positions include 14–19 and 128–131; these read DHGKST and NKCD.

It belongs to the TRAFAC class translation factor GTPase superfamily. Classic translation factor GTPase family. LepA subfamily.

The protein resides in the cell inner membrane. The catalysed reaction is GTP + H2O = GDP + phosphate + H(+). Required for accurate and efficient protein synthesis under certain stress conditions. May act as a fidelity factor of the translation reaction, by catalyzing a one-codon backward translocation of tRNAs on improperly translocated ribosomes. Back-translocation proceeds from a post-translocation (POST) complex to a pre-translocation (PRE) complex, thus giving elongation factor G a second chance to translocate the tRNAs correctly. Binds to ribosomes in a GTP-dependent manner. The chain is Elongation factor 4 from Phocaeicola vulgatus (strain ATCC 8482 / DSM 1447 / JCM 5826 / CCUG 4940 / NBRC 14291 / NCTC 11154) (Bacteroides vulgatus).